The following is a 134-amino-acid chain: Probable RNA-binding protein MJ0652 (134 aa).

Residues 11-108 enclose the CRM domain; the sequence is RKLTGKMKRM…REGWKKYLAK (98 aa).

This chain is Probable RNA-binding protein MJ0652, found in Methanocaldococcus jannaschii (strain ATCC 43067 / DSM 2661 / JAL-1 / JCM 10045 / NBRC 100440) (Methanococcus jannaschii).